The chain runs to 205 residues: Small ribosomal subunit protein uS4 (205 aa).

Residues 25–48 (KTIEARPTPPGQHGAKNTRRKKSD) form a disordered region. In terms of domain architecture, S4 RNA-binding spans 94–157 (RRLDNVVFRA…TKLPIVVETL (64 aa)).

It belongs to the universal ribosomal protein uS4 family. Part of the 30S ribosomal subunit. Contacts protein S5. The interaction surface between S4 and S5 is involved in control of translational fidelity.

In terms of biological role, one of the primary rRNA binding proteins, it binds directly to 16S rRNA where it nucleates assembly of the body of the 30S subunit. Functionally, with S5 and S12 plays an important role in translational accuracy. This is Small ribosomal subunit protein uS4 from Methylobacillus flagellatus (strain ATCC 51484 / DSM 6875 / VKM B-1610 / KT).